The sequence spans 530 residues: Membrane-associated transporter protein (530 aa).

Over 1-45 the chain is Cytoplasmic; that stretch reads MSGSNGPTDTHTYQSLAEDCPFGSVEQPKRSTGRLVMHSMAMFGR. A helical membrane pass occupies residues 46–66; sequence EFCYAVEAAYVTPVLLSVGLP. Residues 67–68 are Extracellular-facing; the sequence is KS. A helical membrane pass occupies residues 69 to 89; it reads LYSMVWLLSPILGFLLQPVVG. Topologically, residues 90–105 are cytoplasmic; it reads SASDHCRARWGRRRPY. The helical transmembrane segment at 106–126 threads the bilayer; that stretch reads ILTLAIMMLLGMALYLNGDAV. The Extracellular portion of the chain corresponds to 127-138; the sequence is VSALVANPRQKL. The chain crosses the membrane as a helical span at residues 139 to 159; sequence IWAISITMVGVVLFDFSADFI. At 160-184 the chain is on the cytoplasmic side; it reads DGPIKAYLFDVCSHQDKEKGLHYHA. A helical transmembrane segment spans residues 185 to 205; it reads LFTGFGGALGYILGAIDWVHL. Residues 206–216 are Extracellular-facing; that stretch reads DLGRLLGTEFQ. Residues 217 to 237 form a helical membrane-spanning segment; it reads VMFFFSALVLILCFITHLCSI. Residues 238–318 lie on the Cytoplasmic side of the membrane; it reads PEAPLRDAAT…ALVNMPSHYR (81 aa). Positions 275–299 are disordered; that stretch reads KNGGADTEQPVQEWKNKKPSGQSQR. A helical transmembrane segment spans residues 319–339; sequence CLCVSHLIGWTAFLSNMLFFT. The Extracellular segment spans residues 340–366; sequence DFMGQIVYHGDPYGAHNSTEFLIYERG. N-linked (GlcNAc...) asparagine glycosylation occurs at N356. The chain crosses the membrane as a helical span at residues 367-387; the sequence is VEVGCWGLCINSVFSSVYSYF. Topologically, residues 388-398 are cytoplasmic; the sequence is QKAMVSYIGLK. A helical membrane pass occupies residues 399–419; that stretch reads GLYFMGYLLFGLGTGFIGLFP. Residues 420 to 425 lie on the Extracellular side of the membrane; sequence NVYSTL. A helical transmembrane segment spans residues 426 to 446; the sequence is VLCSMFGVMSSTLYTVPFNLI. Residues 447–477 lie on the Cytoplasmic side of the membrane; that stretch reads AEYHREEEKEKGQEAPGGPDNQGRGKGVDCA. The helical transmembrane segment at 478-498 threads the bilayer; sequence ALTCMVQLAQILVGGGLGFLV. The Extracellular segment spans residues 499–504; sequence NMAGSV. The helical transmembrane segment at 505–525 threads the bilayer; the sequence is VVVVITASAVSLIGCCFVALF. The Cytoplasmic segment spans residues 526–530; that stretch reads VRYVD.

This sequence belongs to the glycoside-pentoside-hexuronide (GPH) cation symporter transporter (TC 2.A.2) family. As to quaternary structure, interacts with TYRP1. In terms of tissue distribution, mainly expressed in eyeballs and skin melanocytes. Also detected in kidney, colon, gall bladder and pancreas.

It is found in the melanosome membrane. The catalysed reaction is sucrose(out) + H(+)(out) = sucrose(in) + H(+)(in). It carries out the reaction D-glucose(out) + H(+)(out) = D-glucose(in) + H(+)(in). Functionally, proton-associated glucose and sucrose transporter. May be able to transport also fructose. Expressed at a late melanosome maturation stage where functions as a proton/glucose exporter which increase lumenal pH by decreasing glycolysis. Regulates melanogenesis by maintaining melanosome neutralization that is initially initiated by transient OCA2 and required for a proper function of the tyrosinase TYR. This Mus musculus (Mouse) protein is Membrane-associated transporter protein (Slc45a2).